Consider the following 244-residue polypeptide: tRNA (guanine-N(1)-)-methyltransferase (244 aa).

S-adenosyl-L-methionine is bound by residues Gly-113 and Ile-133 to Leu-138.

The protein belongs to the RNA methyltransferase TrmD family. In terms of assembly, homodimer.

Its subcellular location is the cytoplasm. The catalysed reaction is guanosine(37) in tRNA + S-adenosyl-L-methionine = N(1)-methylguanosine(37) in tRNA + S-adenosyl-L-homocysteine + H(+). Its function is as follows. Specifically methylates guanosine-37 in various tRNAs. This is tRNA (guanine-N(1)-)-methyltransferase from Bacillus anthracis (strain A0248).